Reading from the N-terminus, the 277-residue chain is C2H2-type zinc-finger transcription factor (277 aa).

Disordered stretches follow at residues 23-66 and 78-146; these read PTMN…AHPP and MNEP…TDSI. Positions 27 to 37 are enriched in polar residues; the sequence is EIETTDNTYPR. The C2H2-type; degenerate zinc finger occupies 185-208; the sequence is HPCPDCGRVFTRSTARNFHRQSGT.

The protein belongs to the GLI C2H2-type zinc-finger protein family.

The protein resides in the nucleus. Its function is as follows. C2H2-type zinc-finger transcription factor that controls the expression of the nonribosomal peptide synthases inpA and inpB, as well as of the other inp cluster-associated genes. Also mediates the expression of the asperfuranone biosynthesis gene cluster by binding to the afoA promoter. Probably recognizes the 5'-CT/C/AAAAGGAT/AT/GG/CA-3' motif in the promoters of teget genes. The polypeptide is C2H2-type zinc-finger transcription factor (Emericella nidulans (strain FGSC A4 / ATCC 38163 / CBS 112.46 / NRRL 194 / M139) (Aspergillus nidulans)).